The following is a 422-amino-acid chain: F-box/FBD/LRR-repeat protein At5g56420 (422 aa).

Positions Arg-5–Leu-54 constitute an F-box domain. LRR repeat units lie at residues Cys-59–Ile-85, Val-136–Asp-163, Val-164–Arg-189, Asp-193–Lys-212, Ser-214–Asp-238, Leu-279–Thr-304, and Cys-305–Gln-330. Residues Ser-342–Pro-391 enclose the FBD domain.

The protein is F-box/FBD/LRR-repeat protein At5g56420 of Arabidopsis thaliana (Mouse-ear cress).